A 482-amino-acid chain; its full sequence is tRNA modification GTPase MnmE (482 aa).

(6S)-5-formyl-5,6,7,8-tetrahydrofolate contacts are provided by Arg25, Glu82, and Lys135. Residues 231-404 enclose the TrmE-type G domain; the sequence is GIKVVIAGQP…LRRVLLDIAG (174 aa). Asn241 serves as a coordination point for K(+). GTP is bound by residues 241-246, 260-266, 285-288, and 385-387; these read NAGKSS, TPIAGTT, DTAG, and SAR. Ser245 provides a ligand contact to Mg(2+). Residues Thr260, Ile262, and Thr265 each contribute to the K(+) site. Thr266 is a Mg(2+) binding site. Lys482 contacts (6S)-5-formyl-5,6,7,8-tetrahydrofolate.

It belongs to the TRAFAC class TrmE-Era-EngA-EngB-Septin-like GTPase superfamily. TrmE GTPase family. As to quaternary structure, homodimer. Heterotetramer of two MnmE and two MnmG subunits. It depends on K(+) as a cofactor.

It localises to the cytoplasm. In terms of biological role, exhibits a very high intrinsic GTPase hydrolysis rate. Involved in the addition of a carboxymethylaminomethyl (cmnm) group at the wobble position (U34) of certain tRNAs, forming tRNA-cmnm(5)s(2)U34. In Paracidovorax citrulli (strain AAC00-1) (Acidovorax citrulli), this protein is tRNA modification GTPase MnmE.